A 391-amino-acid chain; its full sequence is UPF0229 protein CLH_2838 (391 aa).

2 disordered regions span residues 1–23 and 75–107; these read MAIF…DKRR and VATG…GNEE. Residues 80–92 show a composition bias toward basic and acidic residues; that stretch reads GEEKRGDKIESGS.

The protein belongs to the UPF0229 family.

The sequence is that of UPF0229 protein CLH_2838 from Clostridium botulinum (strain Alaska E43 / Type E3).